The chain runs to 234 residues: Leucyl/phenylalanyl-tRNA--protein transferase (234 aa).

This sequence belongs to the L/F-transferase family.

It localises to the cytoplasm. It catalyses the reaction N-terminal L-lysyl-[protein] + L-leucyl-tRNA(Leu) = N-terminal L-leucyl-L-lysyl-[protein] + tRNA(Leu) + H(+). The enzyme catalyses N-terminal L-arginyl-[protein] + L-leucyl-tRNA(Leu) = N-terminal L-leucyl-L-arginyl-[protein] + tRNA(Leu) + H(+). The catalysed reaction is L-phenylalanyl-tRNA(Phe) + an N-terminal L-alpha-aminoacyl-[protein] = an N-terminal L-phenylalanyl-L-alpha-aminoacyl-[protein] + tRNA(Phe). Its function is as follows. Functions in the N-end rule pathway of protein degradation where it conjugates Leu, Phe and, less efficiently, Met from aminoacyl-tRNAs to the N-termini of proteins containing an N-terminal arginine or lysine. The sequence is that of Leucyl/phenylalanyl-tRNA--protein transferase from Tolumonas auensis (strain DSM 9187 / NBRC 110442 / TA 4).